A 130-amino-acid polypeptide reads, in one-letter code: Small ribosomal subunit protein uS9 (130 aa).

The protein belongs to the universal ribosomal protein uS9 family.

This Alkalilimnicola ehrlichii (strain ATCC BAA-1101 / DSM 17681 / MLHE-1) protein is Small ribosomal subunit protein uS9.